A 156-amino-acid chain; its full sequence is MRCPFCHSDNDKVQDSRTAEAGYVVRRKRLCQTCQRRFTTLEQIDALNVRVVKSDETREPFDREKIKRGIERACSKRAVTSDEIEKTVQKIEEAIYAEFDMEIPTATIGEVVLRKLATLDEVAYIRFASVYRDFDDAKDFLQIVSNLQRDAETEGR.

The segment at 3-34 (CPFCHSDNDKVQDSRTAEAGYVVRRKRLCQTC) is a zinc-finger region. The 91-residue stretch at 49–139 (VRVVKSDETR…VYRDFDDAKD (91 aa)) folds into the ATP-cone domain.

It belongs to the NrdR family. The cofactor is Zn(2+).

Functionally, negatively regulates transcription of bacterial ribonucleotide reductase nrd genes and operons by binding to NrdR-boxes. The sequence is that of Transcriptional repressor NrdR from Rhodopirellula baltica (strain DSM 10527 / NCIMB 13988 / SH1).